A 66-amino-acid polypeptide reads, in one-letter code: Alpha-conotoxin GIB (66 aa).

An N-terminal signal peptide occupies residues 1–21 (MGMRMMFTVFLLVVLATTVVS). A propeptide spanning residues 22-49 (FPSERASDGRDDTAKDEGSDMEKLVEKK) is cleaved from the precursor. 2 cysteine pairs are disulfide-bonded: cysteine 51/cysteine 56 and cysteine 52/cysteine 62. Glycine amide is present on glycine 64.

It belongs to the conotoxin A superfamily. As to expression, expressed by the venom duct.

The protein localises to the secreted. Its function is as follows. Alpha-conotoxins act on postsynaptic membranes, they bind to the nicotinic acetylcholine receptors (nAChR) and thus inhibit them. Both the globular (with C1-C3; C2-C4 disulfide pattern) and ribbon (C1-C4; C2-C3) isomers reversibly inhibit human muscle-type alpha-1-beta-1-delta-epsilon/CHRNA1-CHRNB1-CHRND-CHRNE nAChRs (IC(50)=116 nM and IC(50)=643 nM, respectively). Both isomers also inhibit alpha-7/CHRNA7 and alpha-9-alpha-10/CHRNA9-CHRNA10 (IC(50)=1113 nM by globular isomer) nAChRs. The chain is Alpha-conotoxin GIB from Conus geographus (Geography cone).